The following is a 345-amino-acid chain: Transcription factor 19 (345 aa).

Positions 31-88 (YRLGHRADLCDVALRPQQEPGLISGIHAELHAEPRGDDWRVSLEDHSSQGTLVNNVRL) constitute an FHA domain. S78 is modified (phosphoserine). Disordered stretches follow at residues 147–167 (AGFR…STLS) and 190–227 (LTFS…RKSV). The segment at 293 to 342 (AAPCCCLPQEETVAWVQCDGCDVWFHVACVGCSIQAAREADFRCPGCRAG) adopts a PHD-type zinc-finger fold. The Zn(2+) site is built by C296, C298, C310, C313, H318, C321, C336, and C339.

The protein localises to the nucleus. Its function is as follows. Potential transcription factor that may play a role in the regulation of genes involved in cell cycle G1/S transition. May bind to regulatory elements of genes, including the promoter of the transcription factor FOXO1. The protein is Transcription factor 19 (TCF19) of Pan troglodytes (Chimpanzee).